Here is a 350-residue protein sequence, read N- to C-terminus: S-adenosylmethionine:tRNA ribosyltransferase-isomerase (350 aa).

It belongs to the QueA family. In terms of assembly, monomer.

It localises to the cytoplasm. The catalysed reaction is 7-aminomethyl-7-carbaguanosine(34) in tRNA + S-adenosyl-L-methionine = epoxyqueuosine(34) in tRNA + adenine + L-methionine + 2 H(+). It functions in the pathway tRNA modification; tRNA-queuosine biosynthesis. In terms of biological role, transfers and isomerizes the ribose moiety from AdoMet to the 7-aminomethyl group of 7-deazaguanine (preQ1-tRNA) to give epoxyqueuosine (oQ-tRNA). This Bacillus cereus (strain ZK / E33L) protein is S-adenosylmethionine:tRNA ribosyltransferase-isomerase.